Consider the following 207-residue polypeptide: Strobilurin A biosynthesis cluster protein r1 (207 aa).

A run of 2 helical transmembrane segments spans residues 108–128 and 169–189; these read FIFPSLALKTTIWSVAGLLYL and NLTTGVSYVLGTLVFGFPFWI.

The protein resides in the membrane. Its pathway is mycotoxin biosynthesis. Its function is as follows. Part of the gene cluster that mediates the biosynthesis of strobilurin A, an antifungal polyketide that contains a key beta-methoxyacrylate toxophore that targets the complex III of the mitochondrial electron transport chain. Strobilurin biosynthesis begins with construction of benzoyl CoA by step-wise elimination of ammonia from phenylalanine by the phenylalanine ammonia-lyase str11, oxygenation by str8 and retro-Claisen reaction to form benzoic acid, which is activated to its CoA thiolester benzoyl CoA by the dedicated CoA ligase str10. Benzoyl CoA forms the starter unit for the highly reducing polyketide synthase stpks1 that produces the polyketide prestrobilutin A. The FAD-dependent oxygenase str9 then catalyzes the key oxidative rearrangement responsible for the creation of the beta-methoxyacrylate toxophore. Str9 performs epoxidation of the 2,3 olefin of prestrobilutin A, followed by Meinwald rearrangement to furnish the aldehyde intermediate. Rapid enolization of the aldehyde intermediate would give the beta-methoxyacrylate skeleton and methylations catalyzed by str2 and str3 complete the synthesis and lead to the production of strobilurin A. The short-chain dehydrogenase stl2 and the dehydrogenase str4 play a role in the shunt pathway leading to the production of bolineol. The cluster encodes no obvious halogenase gene that could be involved in production of strobilurin B, nor any obvious dimethylallyl-transferase that could be involved in the production of strobilurin G. It is possible that unknown proteins encoded in, or near, the cluster (such as str1 or stl1) may form new classes of halogenases or dimethylally-transferases, or that the responsible genes are located elsewhere on the genome. Similarly, proteins encoded by str5/str6 hydrolases appear to have no chemical role in the biosynthesis of strobilurin A. Finally, no obvious self-resistance gene is found within the cluster. This Strobilurus tenacellus protein is Strobilurin A biosynthesis cluster protein r1.